We begin with the raw amino-acid sequence, 671 residues long: Vinexin (671 aa).

At Q2 the chain carries N-acetylalanine. Residue R6 is modified to Phosphoserine. Disordered regions lie at residues 46–111 (LNFQ…TKDS), 166–215 (TFEE…RPGA), 249–268 (LETG…EKPS), 295–324 (TRLP…AWSS), and 337–383 (SLSP…KKRK). Over residues 88 to 108 (PSASTKIPASQHTQNWSATWT) the composition is skewed to polar residues. Positions 115 to 187 (DKRWVKYEGI…GAQQRPAHRP (73 aa)) constitute a SoHo domain. The residue at position 348 (S348) is a Phosphoserine. Residues 359–368 (PSSTRDPSAS) are compositionally biased toward polar residues. SH3 domains lie at 380 to 439 (KKRK…VLPA) and 454 to 515 (LEYG…VSRE). The tract at residues 380–515 (KKRKAARLKF…PASYVQVSRE (136 aa)) is binds to vinculin. Residue S395 is modified to Phosphoserine. The disordered stretch occupies residues 519–611 (RLCDDGPQLP…LGTSSPNTSQ (93 aa)). Residue S530 is modified to Phosphoserine; by MAPK1. Over residues 535 to 553 (AAARSARHPSSPSALRSPA) the composition is skewed to low complexity. A phosphoserine mark is found at S544, S545, S547, S551, and S563. The segment covering 560-584 (GQTSPRRTGFSFPTQEPRPQTQNLG) has biased composition (polar residues). Residues 612-671 (IHWTPYRAMYQYRPQNEDELELREGDRVDVMQQCDDGWFVGVSRRTQKFGTFPGNYVAPV) enclose the SH3 3 domain. Positions 612–671 (IHWTPYRAMYQYRPQNEDELELREGDRVDVMQQCDDGWFVGVSRRTQKFGTFPGNYVAPV) are binds to SOS.

As to quaternary structure, interacts with DLG5 through its third SH3 domain. Interacts with vinculin by the first two SH3 domains and the proline rich region of vinculin. Binds to SOS (guanine nucleotide exchange factor of RAS and RAC), through its third SH3 domain. The formation of this complex is down-regulated by phosphorylation of SOS. Interacts with INPPL1/SHIP2, SAFB2, SOCS7 and SRCIN1. Interacts with FASLG. Interacts with MAPK1/ERK2. In terms of processing, phosphorylated at Ser-530 by MAPK1/ERK2 during cell spreading. In terms of tissue distribution, both isoforms are expressed in different tissues like heart, placenta, brain, skeletal muscle and pancreas. Isoform beta is especially found in liver.

Its subcellular location is the cell junction. The protein resides in the cytoplasm. It is found in the cytoskeleton. The protein localises to the nucleus. Vinexin alpha isoform promotes up-regulation of actin stress fiber formation. Vinexin beta isoform plays a role in cell spreading and enhances the activation of JNK/SAPK in response to EGF stimulation by using its third SH3 domain. This Homo sapiens (Human) protein is Vinexin (SORBS3).